We begin with the raw amino-acid sequence, 1288 residues long: VWFA and cache domain-containing protein 1 (1288 aa).

An N-terminal signal peptide occupies residues 1-49 (MAREPEEEETVRPAAVVRRCPRCPGWPGAPRPPLWLLCLVACWILGAVA). Topologically, residues 50-1109 (DADFSILDEA…ITLNMIKSAP (1060 aa)) are extracellular. Asn159 carries an N-linked (GlcNAc...) asparagine glycan. Positions 242 to 457 (HIVVILDHGA…TTVGRFYTNL (216 aa)) constitute a VWFA domain. Cache domains are found at residues 467–546 (FSLP…SEPP) and 786–867 (LTGP…HPTL). The helical transmembrane segment at 1110–1130 (VGPVAGGIMGCIMVLVLAVYA) threads the bilayer. At 1131–1288 (YRHQIHRRSH…VTVHTVDAEC (158 aa)) the chain is on the cytoplasmic side. 2 disordered regions span residues 1157-1176 (NLENDRDERDDDSHEDRGII) and 1187-1237 (ERHV…VDVG). Residues 1159 to 1174 (ENDRDERDDDSHEDRG) show a composition bias toward basic and acidic residues. Over residues 1210-1229 (GYSTMSPQEDSENPPCNNDP) the composition is skewed to polar residues.

It belongs to the calcium channel subunit alpha-2/delta family.

The protein resides in the membrane. May regulate voltage-dependent calcium channels. The polypeptide is VWFA and cache domain-containing protein 1 (Cachd1) (Mus musculus (Mouse)).